Here is a 710-residue protein sequence, read N- to C-terminus: Solute carrier organic anion transporter family member 3A1 (710 aa).

The residue at position 1 (Met-1) is an N-acetylmethionine. Gly residues predominate over residues 1–15 (MQGKKPGGSSGGGRS). Residues 1–25 (MQGKKPGGSSGGGRSGELQGDEAQR) form a disordered region. Over 1–40 (MQGKKPGGSSGGGRSGELQGDEAQRNKKKKKKVSCFSNIK) the chain is Cytoplasmic. The chain crosses the membrane as a helical span at residues 41–60 (IFLVSECALMLAQGTVGAYL). Over 61–79 (VSVLTTLERRFNLQSADVG) the chain is Extracellular. A helical membrane pass occupies residues 80–100 (VIASSFEIGNLALILFVSYFG). Over 101 to 106 (ARGHRP) the chain is Cytoplasmic. The helical transmembrane segment at 107 to 131 (RLIGCGGIVMALGALLSALPEFLTH) threads the bilayer. The Extracellular segment spans residues 132-174 (QYKYEAGEIRWGAEGRDVCATNGSSSDEGPDPDLICRNRTATN). N-linked (GlcNAc...) asparagine glycosylation is found at Asn-153 and Asn-169. The chain crosses the membrane as a helical span at residues 175 to 203 (MMYLLLIGAQVLLGIGATPVQPLGVSYID). Over 204–222 (DHVRRKDSSLYIGILFTML) the chain is Cytoplasmic. Residues 223-243 (VFGPACGFILGSFCTKIYVDA) form a helical membrane-spanning segment. At 244-261 (VFIDTSNLDITPDDPRWI) the chain is on the extracellular side. Residues 262–286 (GAWWGGFLLCGALLFFSSLLMFGFP) form a helical membrane-spanning segment. Residues 287–344 (QSLPPHSEPGMESEQAMLPEREYERPKPSNGVLRHPLEPDSSASCFQQLRVIPKVTKH) are Cytoplasmic-facing. The chain crosses the membrane as a helical span at residues 345-366 (LLSNPVFTCIVLAACMEIAVVA). The Extracellular segment spans residues 367-386 (GFAAFLGKYLEQQFNLTTSS). N-linked (GlcNAc...) asparagine glycosylation is present at Asn-381. The helical transmembrane segment at 387-410 (ANQLLGMTAIPCACLGIFLGGLLV) threads the bilayer. At 411–414 (KKLS) the chain is on the cytoplasmic side. Residues 415–438 (LSALGAIRMAMLVNLVSTACYVSF) form a helical membrane-spanning segment. The Extracellular portion of the chain corresponds to 439–539 (LFLGCDTVPV…PGCQEAFLTF (101 aa)). A glycan (N-linked (GlcNAc...) asparagine) is linked at Asn-457. Residues 465–513 (LDPYSPCNNNCECQTDSFTPVCGADGITYLSACFAGCNSTNLTGCACLT) enclose the Kazal-like domain. 3 disulfides stabilise this stretch: Cys-471–Cys-501, Cys-477–Cys-497, and Cys-486–Cys-511. 3 N-linked (GlcNAc...) asparagine glycosylation sites follow: Asn-502, Asn-505, and Asn-519. Residues 540 to 562 (LCVMCVCSLIGAMAQTPSVIILI) traverse the membrane as a helical segment. At 563–571 (RTVSPELKS) the chain is on the cytoplasmic side. The helical transmembrane segment at 572–597 (YALGVLFLLLRLLGFIPPPLIFGAGI) threads the bilayer. Over 598-630 (DSTCLFWSTFCGEQGACVLYDNVVYRYLYVSIA) the chain is Extracellular. Residues 631–648 (IALKSFAFILYTTTWQCL) traverse the membrane as a helical segment. Topologically, residues 649 to 705 (RKNYKRYIKNHEGGLSTSEFLASTLTLDNLGRDPVPAHQTHRTKFIYNLEDHEWCEN) are cytoplasmic.

This sequence belongs to the organo anion transporter (TC 2.A.60) family. In terms of tissue distribution, expressed in many brain regions, including frontal cortex, brain stem and cerebellum. Associated with neuronal bodies in a punctated matter. Detected at the arcuate nucleus and the choroid plexus (at protein level). Little expression, if any, in oligodendrocytes. In the cardiovascular system, detected in cardiac muscle cells and endothelial cells of aorta, coronary artery and left ventricular endocardium (at protein level). In the respiratory system, detected in alveolar epithelial cells and in mucosal epithelium of the trachea (at protein level). In the reproductive system, detected in spermatozoa, oocytes, smooth muscle cells of the ovary, epithelium of the glandula uterine, smooth muscle cells of the myometrium and epithelium of the endometrium (at protein level). In the kidney, detected in afferent and efferent arterioles, and the epithelium of distal tubules and collecting tubules (at protein level).

Its subcellular location is the basolateral cell membrane. The protein localises to the apical cell membrane. It localises to the basal cell membrane. The catalysed reaction is L-thyroxine(out) = L-thyroxine(in). It carries out the reaction prostaglandin E1(out) = prostaglandin E1(in). It catalyses the reaction prostaglandin E2(out) = prostaglandin E2(in). The enzyme catalyses prostaglandin F2alpha(out) = prostaglandin F2alpha(in). The catalysed reaction is (5Z,8Z,11Z,14Z)-eicosatetraenoate(out) = (5Z,8Z,11Z,14Z)-eicosatetraenoate(in). It carries out the reaction taurocholate(out) = taurocholate(in). It catalyses the reaction glycocholate(out) = glycocholate(in). The enzyme catalyses estrone 3-sulfate(out) = estrone 3-sulfate(in). The catalysed reaction is argipressin(out) = argipressin(in). Its function is as follows. Putative organic anion antiporter with apparent broad substrate specificity. Recognizes various substrates including thyroid hormone L-thyroxine, prostanoids such as prostaglandin E1 and E2, bile acids such as taurocholate, glycolate and glycochenodeoxycholate and peptide hormones such as L-arginine vasopressin, likely operating in a tissue-specific manner. The transport mechanism, its electrogenicity and potential tissue-specific counterions remain to be elucidated. The protein is Solute carrier organic anion transporter family member 3A1 (Slco3a1) of Rattus norvegicus (Rat).